A 538-amino-acid chain; its full sequence is Probable ribonuclease 3 (538 aa).

RNase III domains are found at residues 24-149 (IKSY…LNFG) and 238-381 (ASQM…EGYL). Residues 408–477 (LISQNIEVLH…NYKDLILQLY (70 aa)) form the DRBM domain.

This sequence belongs to the ribonuclease III family.

It carries out the reaction Endonucleolytic cleavage to 5'-phosphomonoester.. Its function is as follows. Digests double-stranded RNA. This Acanthamoeba polyphaga (Amoeba) protein is Probable ribonuclease 3.